Here is a 64-residue protein sequence, read N- to C-terminus: Large ribosomal subunit protein uL29 (64 aa).

The protein belongs to the universal ribosomal protein uL29 family.

The polypeptide is Large ribosomal subunit protein uL29 (Nitratiruptor sp. (strain SB155-2)).